The following is an 855-amino-acid chain: Potassium channel AKT2 (855 aa).

The span at 1–12 shows a compositional bias: low complexity; that stretch reads MKTSSFESASSS. A disordered region spans residues 1 to 24; that stretch reads MKTSSFESASSSGGSGGGGGGGGG. The Cytoplasmic portion of the chain corresponds to 1–75; that stretch reads MKTSSFESAS…PLDSRYRCWD (75 aa). The span at 13 to 24 shows a compositional bias: gly residues; sequence GGSGGGGGGGGG. Residues 76–96 traverse the membrane as a helical segment; sequence TFMVVLVAYSAWVYPFEVAFM. The Extracellular segment spans residues 97 to 105; sequence NASPKGGLE. Residues 106–126 traverse the membrane as a helical segment; that stretch reads VADIVVDLFFAVDIVLTFFVA. The Cytoplasmic segment spans residues 127–149; the sequence is YIDSRTQLLVRDRRRIATRYLST. The helical transmembrane segment at 150 to 170 threads the bilayer; the sequence is FFIMDVASTIPFQGLAYIVTG. The Extracellular portion of the chain corresponds to 171–179; the sequence is EVRESPAFS. A helical; Voltage-sensor membrane pass occupies residues 180–200; it reads LLGILRLWRLRKVKQFFTRLE. Over 201–214 the chain is Cytoplasmic; that stretch reads KDIRFNYFWIRCAR. A helical membrane pass occupies residues 215 to 235; the sequence is LIAVTLFLVHCAGCLYYLIAD. The Extracellular segment spans residues 236 to 262; it reads RYPHREKTWIGAVIPDFQEASLWIRYT. Residues 263-282 constitute an intramembrane region (pore-forming); the sequence is SSVYWSITTMTTVGYGDMHA. The Extracellular portion of the chain corresponds to 283–285; the sequence is QNT. A helical membrane pass occupies residues 286-306; sequence VEMIFNIFYMLFNLGLTAYLI. Over 307-855 the chain is Cytoplasmic; the sequence is GNMTNLVVEG…VASMDSVSGS (549 aa). 391–511 is an a nucleoside 3',5'-cyclic phosphate binding site; the sequence is LFKGVSREVL…VVIIKNFLKH (121 aa). ANK repeat units lie at residues 536-565, 569-598, 602-631, 634-663, and 667-696; these read NIPCNLLTVAATGNSSFLEDLLKVGMDPDV, KGRTALHIAASKGYEDCVLVLLKQACNVNI, QGNTALWNAIAARHHKIFNILYHFARVSSP, AAGDLLCLAARRGDLDTLRELLKHGLAVDS, and DGATALRVALAEGHADVARLLVLNGASVDR. Positions 744–765 are disordered; it reads EVGSSGDSRNGRRQSARSDGAH. The KHA domain occupies 768–855; the sequence is RVSIYRGHPF…VASMDSVSGS (88 aa).

Belongs to the potassium channel family. Plant (TC 1.A.1.4) subfamily. The potassium channel is probably a homo- or heterotetrameric complex of pore-forming subunits.

It localises to the membrane. Functionally, probable inward-rectifying potassium channel. Assuming opened or closed conformations in response to the voltage difference across the membrane, the channel is activated by hyperpolarization. In Oryza sativa subsp. japonica (Rice), this protein is Potassium channel AKT2.